The sequence spans 327 residues: tRNA(Ile)-lysidine synthase (327 aa).

32–37 (SGGQDS) lines the ATP pocket.

It belongs to the tRNA(Ile)-lysidine synthase family.

It is found in the cytoplasm. It carries out the reaction cytidine(34) in tRNA(Ile2) + L-lysine + ATP = lysidine(34) in tRNA(Ile2) + AMP + diphosphate + H(+). In terms of biological role, ligates lysine onto the cytidine present at position 34 of the AUA codon-specific tRNA(Ile) that contains the anticodon CAU, in an ATP-dependent manner. Cytidine is converted to lysidine, thus changing the amino acid specificity of the tRNA from methionine to isoleucine. This Synechococcus sp. (strain JA-2-3B'a(2-13)) (Cyanobacteria bacterium Yellowstone B-Prime) protein is tRNA(Ile)-lysidine synthase.